The primary structure comprises 3620 residues: MSSPFLWSLIILLTFAESNGEAGGFELQRQKRSIDFQQPRMATERGNLVFLVGSAQNIEFRTGSLGKIKLNEEDLGECLHQIQKNKEDITDLKRSAVNVPQNISSQIHQLNSKLVDLERKFQSLQQTVDKKVCSSNPCQNGGTCLNLHDSFFCICPSQWKGPLCSVDVNECQIYSGTPLGCQNGATCENTAGSYSCLCSPETHGPQCASKYDDCEGGSKALCVHGICEDLVRVKADEPKYNCICDAGWTSPLNSSACVLDIDECNLQHAPCSPLVQCFNTQGSFYCGACPTGWQGNGYSCQDIDECKINNGGCSVVPPVMCVNTLGSYHCQACPPGYQGDGRVCTVIDICSVNNGGCHPEASCSSVLGSLPLCTCLPGYTGNGYGPNGCAQLSDTCLSHPCLNGQCIETVSGYLCKCESGWAGINCTENINECLSNPCFNGGTCVDGVNAFSCECTRFWTGFLCQIPQQVCGGSLSGMDGSFSYMSPDVGYVHDVNCFWVIRTEDRKVLRITFTFFQLESVNNCPHEFLQIHDGDSSAALQLGRFCGSVLPHELLSSNNALYFHLYSEHFRSGRGFTIRWETQQPECGGILMGTYGSIKSPGYPGNYPPGRDCVWQVVTSPDLLITFTFGTLSLEHHDDCSKDYLEIRDGPLYQDPSLGKFCTTLSVPPLQTTGPFARVHFHSDNQINDQGFHITYLTSPSDLHCGGNYTDPEGLLSSDLSGPFTHNRQCIYIIKQPLGEQIQVNFTHVELEGQSSCSQSHIEVRDDKILLGKVCDNETLPHIKSIRNHIWIRLKIDASLVRASFRAVYQVACGGELTGEGVIRSPFYPNVYPGERICRWTIHQPQSQVVILNFTAFGIESSAHCDTDYIEIGSSSILGSPENKKYCGTDIPLFITSVYNFLYVIFVKSSSTENHGFMAKFSAADLACGEILTESTGIIQSPGHPNIYPHGINCTWHILVQPGHLIHLIFRKFHLEFHYNCTNDYLEVYDTGSNTYLGRYCGKSIPPSLTSSTNSLKLIFVADSDLAYEGFLINYEATDASSACMEDYTENSGTFTSPNFPNNYPNNWKCIYRITVETSQQIALHFTNFALEEAIGGQCVADFVEIRDGGYETSPPLGTYCGSIPPPRIISHSNKLWLQFTSDFLGSGPGFSAYWDGSLTGCGGNITTPTGVFTSPSYPMPYYHSSECYWLLKASHGSPFELEFEDFHLEHHPNCTLDYLAVYDGPSTSSHLLSQLCGNEKPPVIRSTGDSMFLKFRTDEDQQGGGFLAKYQQTCRNVVIVNRNYGILESIHYPNPYSDNQRCNWTIQATTGNTVNYTFLAFELENHINCSTDYLELYDGPRRMGRYCGADMPPTGSTTGSKLQVLFYTDGVGHQEKGFQMQWFIHGCGGELSGTTGSFSSPGYPNTYPPNKECIWYITTAPGSSIQLTIHDFDVEYHARCNFDVLEVYGGPDFHSPRITQLCSQRSSENPMQVSSTGNELAIRFKTDSSINGRGFNASWQAVPGGCGGIFQAPNGEIHSPNYPSPYRGNTDCSWVIRVERNHRILLNFTDFDLEPQDSCITAYDGLSSTTTRLASVCGRQQLTNPITSSGNSLFLRFQSGPSRQGRGFRAQFNQVCGGHILTNSFDTISSPLFPAKYPNNQNCSWVIQAQPPFNHITLSFDHFGLESSTTCTQDFLEILDGDYDDAPLRGRYCGHSMPHPITSFSSALTLRFVSDSRVNSDGFHATYAASSSACGGTFHMAEGIFNSPGYPEVYPSNVECVWNIVSSPGNRLQLSFITFQLEDSQDCSRDFVEVREGNATGHLVGRYCGNVLPLNYSSIVGHILWIRFVSDGSGSGTGFQATFTKIFGNDNIVGTHGKIASPLWPGRYPHNSNYQWIVNVNATQVIHGRILEIDIEGAQSCYYDKLRVYDGLGIHSRLIGTYCGTQTTSFSSSRNSLTFQFSSDSSITGKGFLLEWFAVNASGGPLPTIATGACGGFLRTGDAPVFLFSPGWPESYSNSADCTWLIQAPDSTVELNILSLDIEAQRTCDYDKLVIRDGDSNLAPQLAVLCGREIPGPIRSTGEYMFIRFTSDFSITGAGFNASFHKSCGGYLHADRGIITSPQYPETYSPNLNCSWHVLVQSGLTIAVHFEQPFQIPSGDSSCSQGDYLVLKNGPDIYSPPLGPYGRNGHFCGSRPSSTLFTSDNQMFVQFISDGSNGGQGFKIKYEAKSLACGGNIYIHDVNSAGYVTSPGHPNNYPQHADCNWLIAAPPGKLIRVQFEDQFNIEETPNCVSNYLELRDGVDSNAPLLAKLCGRSLPSSQLSSGEVMYLRFRSDNSSTQVGFKIKYAIAQCGGRVTGQSGIIESSGYPTLPYRDNSFCEWHLKGPSGHYLTIHFEDFHLQNSSGCEKDFVEIWENHTSGNLLGRYCGNTIPDSIDTSSNVALVRFVTDGSVTASGFRLRFESSMEACGGELQGPTGTFTSPNYPNPNPHGRVCEWRIMVQEGRRITLTFNNLRLEAHPSCYSEHVTIFNGIRNNSPQLEKLCGSVNASSEIKSSGNTMKVVFFTDGSRPFGGFSATYTSSEDAVCGGSLTHFPEGNFTSPGYNGVSNYSRNLNCEWTLSNPNQGNSSIYIHFEDFYLESHQDCQFDVLEFRVGNADGPLMWRLCGPSKPIVPLVIPYPEVWIHFVTNEHVEHVGFHAEYSFTDCGGIQLGESGVIASPNYPASYDSLTHCSWLLEAPQGFTITLTFSDFDIEDHATCAWDSVSVRNGGSPGSPIIGQYCGTSNPRTIQSGSNQLVVIFNSDHSVQNGGFYATWNTQTLGCGGILHSDNGTIRSPHWPQNFPENSRCSWTVITHESKQLEISFDNNFRIPSGDGQCQNSFVKVWAGTEEVAESLLATGCGNVAPGSILTPRNVFIAVFQSQETPAQGFSASFVSRCGGNFTNPSGYILSPNYPRQYDNNMNCTYIIEADPLSVVLLTFESFHLEARSAITGSCANDGVHIIRGSNLSSTPFATVCGNEILSPVTILGPVLLNFYSNAHTTDLGFKFNYKITSCGGVFNVSTGVIKSPAYSYSDYPNNIYCLYTIVGRDDRVVQLKFSDFDVVPSTFCSQDYLAIYDGSNISDPLLGKFCGSNLPPNIKSSNHSMLLVFKTDSFQTARGWKITFQQTLGPQQGCGGYLTGSDNTFASPDSDSNGRYDKNLNCVWFIIAPVNKLIKLTFNTFALEAQSAMQRCIYDYVKLYDGDSENANLAGTFCGSTVPAPFISSGNFLTVQFVSDVTLEREGFNATYTTVDMPCGGTYNATWTPQSISSPNSSNPEVPLSMCMWFLEAPPHQQVKITVWALELHSQDCDQNYLEFRDSPESNGSPGPQICGRNASATPTFYSSRSTAIVIFKSEVLNRNSRVGFTYQIAGCNREYNKAFGNLKSPGWPDNYDNNLDCTVILTAPQNHTISLFFHSFGIEDSSECTHDFLEVRNGSDSSSPLFGTYCGTLLPDPIFSRNNKLYLRFKTDSATSNRGYEIVWTSSPSGCGGTLYGDSGSFTSPGYPGTYPNNTDCEWAIIAPAGRPVTVTFYFISIDDPGDCVQNYLILYDGPDANSPSFGPYCGADTNIAPFVASSHRVFIKFHAEYAVYPSAIRLTWDS.

The signal sequence occupies residues 1-20 (MSSPFLWSLIILLTFAESNG). Positions 21–32 (EAGGFELQRQKR) are cleaved as a propeptide — removed in mature form. Positions 39–46 (PRMATERG) are interaction with AMN. An N-linked (GlcNAc...) asparagine glycan is attached at Asn-102. An EGF-like 1 domain is found at 129–165 (DKKVCSSNPCQNGGTCLNLHDSFFCICPSQWKGPLCS). Cystine bridges form between Cys-133–Cys-144, Cys-138–Cys-153, Cys-155–Cys-164, Cys-171–Cys-187, Cys-181–Cys-196, and Cys-198–Cys-207. In terms of domain architecture, EGF-like 2; calcium-binding spans 167-208 (DVNECQIYSGTPLGCQNGATCENTAGSYSCLCSPETHGPQCA). N-linked (GlcNAc...) asparagine glycosylation is present at Asn-253. An EGF-like 3; calcium-binding domain is found at 260-301 (DIDECNLQHAPCSPLVQCFNTQGSFYCGACPTGWQGNGYSCQ). Cystine bridges form between Cys-264-Cys-277, Cys-271-Cys-286, Cys-289-Cys-300, Cys-306-Cys-321, Cys-313-Cys-330, Cys-333-Cys-344, Cys-350-Cys-363, Cys-357-Cys-373, Cys-396-Cys-406, Cys-401-Cys-415, Cys-417-Cys-426, Cys-433-Cys-444, Cys-438-Cys-453, Cys-455-Cys-464, Cys-471-Cys-497, Cys-524-Cys-546, Cys-587-Cys-613, Cys-640-Cys-662, and Cys-705-Cys-730. An EGF-like 4; calcium-binding domain is found at 302-345 (DIDECKINNGGCSVVPPVMCVNTLGSYHCQACPPGYQGDGRVCT). 2 consecutive EGF-like domains span residues 346 to 382 (VIDICSVNNGGCHPEASCSSVLGSLPLCTCLPGYTGN) and 392 to 427 (LSDTCLSHPCLNGQCIETVSGYLCKCESGWAGINCT). The N-linked (GlcNAc...) asparagine glycan is linked to Asn-425. The EGF-like 7; calcium-binding domain occupies 429-465 (NINECLSNPCFNGGTCVDGVNAFSCECTRFWTGFLCQ). 13 CUB domains span residues 471–583 (CGGS…WETQ), 587–699 (CGGI…YLTS), 705–812 (CGGN…YQVA), 813–924 (CGGE…FSAA), 928–1038 (CGEI…YEAT), 1044–1158 (CMED…WDGS), 1162–1274 (CGGN…YQQT), 1275–1386 (CRNV…WFIH), 1388–1503 (CGGE…WQAV), 1507–1616 (CGGI…FNQV), 1617–1731 (CGGH…YAAS), 1735–1847 (CGGT…FTKI), and 1849–1960 (GNDN…WFAV). 2 N-linked (GlcNAc...) asparagine glycosylation sites follow: Asn-708 and Asn-745. Cys-757 and Cys-775 are joined by a disulfide. Residue Asn-777 is glycosylated (N-linked (GlcNAc...) asparagine). The cysteines at positions 813 and 838 are disulfide-linked. Asn-853 is a glycosylation site (N-linked (GlcNAc...) asparagine). 2 disulfide bridges follow: Cys-865–Cys-887 and Cys-928–Cys-954. Asn-953 carries N-linked (GlcNAc...) asparagine glycosylation. Residue Glu-976 coordinates Ca(2+). Asn-980 carries N-linked (GlcNAc...) asparagine glycosylation. Cys-981 and Cys-1001 are oxidised to a cystine. Ca(2+) is bound by residues Asp-984, Asp-1023, Asp-1025, and Leu-1026. Cysteines 1044 and 1070 form a disulfide. 3 residues coordinate Ca(2+): Glu-1092, Asp-1102, and Asp-1143. Cys-1099 and Cys-1121 are joined by a disulfide. A disulfide bridge connects residues Cys-1162 and Cys-1188. Asn-1165 carries an N-linked (GlcNAc...) asparagine glycan. Glu-1210 is a binding site for Ca(2+). A glycan (N-linked (GlcNAc...) asparagine) is linked at Asn-1214. A disulfide bridge links Cys-1215 with Cys-1237. 3 residues coordinate Ca(2+): Asp-1218, Asp-1259, and Gln-1262. Cys-1275 and Cys-1303 are oxidised to a cystine. Residues Asn-1304 and Asn-1316 are each glycosylated (N-linked (GlcNAc...) asparagine). Glu-1325 contributes to the Ca(2+) binding site. The N-linked (GlcNAc...) asparagine glycan is linked to Asn-1329. Cys-1330 and Cys-1348 form a disulfide bridge. 3 residues coordinate Ca(2+): Asp-1333, Asp-1370, and Val-1372. 2 cysteine pairs are disulfide-bonded: Cys-1388–Cys-1414 and Cys-1441–Cys-1463. The N-linked (GlcNAc...) asparagine glycan is linked to Asn-1497. Cys-1507 and Cys-1533 form a disulfide bridge. Asn-1548 is a glycosylation site (N-linked (GlcNAc...) asparagine). 5 disulfides stabilise this stretch: Cys-1560-Cys-1578, Cys-1617-Cys-1644, Cys-1672-Cys-1694, Cys-1735-Cys-1761, and Cys-1788-Cys-1809. Asn-1643 carries an N-linked (GlcNAc...) asparagine glycan. N-linked (GlcNAc...) asparagine glycosylation is found at Asn-1799, Asn-1816, and Asn-1882. Cys-1902 and Cys-1924 are joined by a disulfide. Asn-1961 carries an N-linked (GlcNAc...) asparagine glycan. 2 disulfides stabilise this stretch: Cys-1975-Cys-2003 and Cys-2029-Cys-2051. CUB domains follow at residues 1975-2088 (CGGF…FHKS), 2089-2210 (CGGY…YEAK), 2214-2331 (CGGN…YAIA), 2333-2445 (CGGR…FESS), 2449-2562 (CGGE…YTSS), 2567-2684 (CGGS…YSFT), 2686-2798 (CGGI…WNTQ), 2802-2916 (CGGI…FVSR), 2917-3032 (CGGN…YKIT), 3034-3147 (CGGV…FQQT), 3154-3271 (CGGY…YTTV), 3275-3392 (CGGT…IAGC), 3392-3504 (CNRE…WTSS), and 3508-3620 (CGGT…TWDS). Residues Asn-2082 and Asn-2114 are each glycosylated (N-linked (GlcNAc...) asparagine). Intrachain disulfides connect Cys-2089–Cys-2115, Cys-2214–Cys-2244, and Cys-2272–Cys-2294. The N-linked (GlcNAc...) asparagine glycan is linked to Asn-2317. Cys-2333 and Cys-2360 are disulfide-bonded. 2 N-linked (GlcNAc...) asparagine glycosylation sites follow: Asn-2383 and Asn-2397. Disulfide bonds link Cys-2387-Cys-2408, Cys-2449-Cys-2475, and Cys-2502-Cys-2524. N-linked (GlcNAc...) asparagine glycosylation is found at Asn-2528, Asn-2578, Asn-2589, and Asn-2607. Cys-2567 and Cys-2596 are disulfide-bonded. Disulfide bonds link Cys-2625–Cys-2646, Cys-2686–Cys-2712, Cys-2739–Cys-2761, Cys-2802–Cys-2828, Cys-2857–Cys-2880, Cys-2917–Cys-2943, and Cys-2974–Cys-2996. N-linked (GlcNAc...) asparagine glycosylation is present at Asn-2810. N-linked (GlcNAc...) asparagine glycans are attached at residues Asn-2920, Asn-2942, and Asn-2986. Thr-3005 is modified (phosphothreonine). 2 disulfide bridges follow: Cys-3034–Cys-3061 and Cys-3088–Cys-3110. 3 N-linked (GlcNAc...) asparagine glycosylation sites follow: Asn-3039, Asn-3100, and Asn-3122. Disulfide bonds link Cys-3154–Cys-3182 and Cys-3212–Cys-3234. N-linked (GlcNAc...) asparagine glycosylation is found at Asn-3265, Asn-3280, and Asn-3292. Cystine bridges form between Cys-3275/Cys-3303 and Cys-3329/Cys-3351. Residue Asn-3354 is glycosylated (N-linked (GlcNAc...) asparagine). Cys-3392 and Cys-3418 are disulfide-bonded. N-linked (GlcNAc...) asparagine glycosylation is found at Asn-3427, Asn-3454, and Asn-3530. Intrachain disulfides connect Cys-3445–Cys-3467, Cys-3508–Cys-3534, and Cys-3561–Cys-3583.

Interacts with AMN. Component of the cubam complex composed of one CUBN trimer and one AMN chain. The cubam complex can dimerize. Interacts with LRP2 in a dual-receptor complex in a calcium-dependent manner. Found in a complex with PID1/PCLI1, LRP1 and CUBNI. Interacts with LRP1 and PID1/PCLI1. Post-translationally, the precursor is cleaved by a trans-Golgi proteinase furin, removing a propeptide. In terms of processing, N-glycosylated. Detected in kidney cortex (at protein level). Detected in kidney, duodenum and jejunum.

The protein localises to the apical cell membrane. Its subcellular location is the cell membrane. It is found in the membrane. The protein resides in the coated pit. It localises to the endosome. The protein localises to the lysosome membrane. Endocytic receptor which plays a role in lipoprotein, vitamin and iron metabolism by facilitating their uptake. Acts together with LRP2 to mediate endocytosis of high-density lipoproteins, GC, hemoglobin, ALB, TF and SCGB1A1. Acts together with AMN to mediate endocytosis of the CBLIF-cobalamin complex. Binds to ALB, MB, Kappa and lambda-light chains, TF, hemoglobin, GC, SCGB1A1, APOA1, high density lipoprotein, and the CBLIF-cobalamin complex. Ligand binding requires calcium. Serves as important transporter in several absorptive epithelia, including intestine, renal proximal tubules and embryonic yolk sac. May play an important role in the development of the peri-implantation embryo through internalization of APOA1 and cholesterol. Binds to LGALS3 at the maternal-fetal interface. The chain is Cubilin (CUBN) from Canis lupus familiaris (Dog).